We begin with the raw amino-acid sequence, 246 residues long: Putative L,D-transpeptidase YafK (246 aa).

An N-terminal signal peptide occupies residues 1–19 (MRKIALILAMLLIPCVSFA). Residues 44-174 (VYIQIFKEER…GQPSVQVSIY (131 aa)) form the L,D-TPase catalytic domain. His135 acts as the Proton donor/acceptor in catalysis. Catalysis depends on Cys143, which acts as the Nucleophile.

It belongs to the YkuD family.

Its pathway is cell wall biogenesis; peptidoglycan biosynthesis. The polypeptide is Putative L,D-transpeptidase YafK (yafK) (Escherichia coli O157:H7).